The sequence spans 425 residues: Phosphoribosylamine--glycine ligase (425 aa).

Residues 109–315 form the ATP-grasp domain; it reads KALMQEAGIP…LEELILACVQ (207 aa). 135–195 is a binding site for ATP; sequence IQAQGAPIVV…EECLTGQEVS (61 aa). Residues Glu285 and Asn287 each contribute to the Mg(2+) site.

Belongs to the GARS family. It depends on Mg(2+) as a cofactor. Mn(2+) is required as a cofactor.

It carries out the reaction 5-phospho-beta-D-ribosylamine + glycine + ATP = N(1)-(5-phospho-beta-D-ribosyl)glycinamide + ADP + phosphate + H(+). It functions in the pathway purine metabolism; IMP biosynthesis via de novo pathway; N(1)-(5-phospho-D-ribosyl)glycinamide from 5-phospho-alpha-D-ribose 1-diphosphate: step 2/2. This chain is Phosphoribosylamine--glycine ligase, found in Nostoc sp. (strain PCC 7120 / SAG 25.82 / UTEX 2576).